The primary structure comprises 410 residues: Elongation factor Tu, chloroplastic (410 aa).

Positions 10 to 214 (KPHVNIGTIG…NVDEYIPTPE (205 aa)) constitute a tr-type G domain. The segment at 19-26 (GHVDHGKT) is G1. 19 to 26 (GHVDHGKT) is a GTP binding site. A Mg(2+)-binding site is contributed by T26. Residues 60 to 64 (GITIN) form a G2 region. The segment at 81 to 84 (DCPG) is G3. Residues 81–85 (DCPGH) and 136–139 (NKED) contribute to the GTP site. Residues 136–139 (NKED) form a G4 region. Positions 174 to 176 (SAL) are G5.

The protein belongs to the TRAFAC class translation factor GTPase superfamily. Classic translation factor GTPase family. EF-Tu/EF-1A subfamily.

It localises to the plastid. The protein localises to the chloroplast stroma. The enzyme catalyses GTP + H2O = GDP + phosphate + H(+). In terms of biological role, GTP hydrolase that promotes the GTP-dependent binding of aminoacyl-tRNA to the A-site of ribosomes during protein biosynthesis. In Bigelowiella natans (Pedinomonas minutissima), this protein is Elongation factor Tu, chloroplastic (tufA).